Consider the following 286-residue polypeptide: Phosphatidylserine decarboxylase proenzyme (286 aa).

Catalysis depends on charge relay system; for autoendoproteolytic cleavage activity residues aspartate 91, histidine 148, and serine 251. The active-site Schiff-base intermediate with substrate; via pyruvic acid; for decarboxylase activity is serine 251. Serine 251 carries the post-translational modification Pyruvic acid (Ser); by autocatalysis.

This sequence belongs to the phosphatidylserine decarboxylase family. PSD-B subfamily. Prokaryotic type I sub-subfamily. In terms of assembly, heterodimer of a large membrane-associated beta subunit and a small pyruvoyl-containing alpha subunit. Requires pyruvate as cofactor. Post-translationally, is synthesized initially as an inactive proenzyme. Formation of the active enzyme involves a self-maturation process in which the active site pyruvoyl group is generated from an internal serine residue via an autocatalytic post-translational modification. Two non-identical subunits are generated from the proenzyme in this reaction, and the pyruvate is formed at the N-terminus of the alpha chain, which is derived from the carboxyl end of the proenzyme. The autoendoproteolytic cleavage occurs by a canonical serine protease mechanism, in which the side chain hydroxyl group of the serine supplies its oxygen atom to form the C-terminus of the beta chain, while the remainder of the serine residue undergoes an oxidative deamination to produce ammonia and the pyruvoyl prosthetic group on the alpha chain. During this reaction, the Ser that is part of the protease active site of the proenzyme becomes the pyruvoyl prosthetic group, which constitutes an essential element of the active site of the mature decarboxylase.

The protein localises to the cell membrane. The catalysed reaction is a 1,2-diacyl-sn-glycero-3-phospho-L-serine + H(+) = a 1,2-diacyl-sn-glycero-3-phosphoethanolamine + CO2. Its pathway is phospholipid metabolism; phosphatidylethanolamine biosynthesis; phosphatidylethanolamine from CDP-diacylglycerol: step 2/2. Its function is as follows. Catalyzes the formation of phosphatidylethanolamine (PtdEtn) from phosphatidylserine (PtdSer). The chain is Phosphatidylserine decarboxylase proenzyme from Marinobacter nauticus (strain ATCC 700491 / DSM 11845 / VT8) (Marinobacter aquaeolei).